The following is a 161-amino-acid chain: Endoribonuclease YbeY (161 aa).

His-121, His-125, and His-131 together coordinate Zn(2+).

The protein belongs to the endoribonuclease YbeY family. Zn(2+) is required as a cofactor.

It localises to the cytoplasm. In terms of biological role, single strand-specific metallo-endoribonuclease involved in late-stage 70S ribosome quality control and in maturation of the 3' terminus of the 16S rRNA. The sequence is that of Endoribonuclease YbeY from Bordetella avium (strain 197N).